A 210-amino-acid chain; its full sequence is Na(+)-translocating NADH-quinone reductase subunit D (210 aa).

6 consecutive transmembrane segments (helical) span residues 14 to 34 (PIVNNNPIALQVLGVCSALAV), 42 to 62 (LVMALALTAVTAFSNLFISMI), 72 to 92 (IIVQMTIIASLVIVVDQLLQA), 103 to 123 (VFVGLIITNCIVMGRAEAYAM), 131 to 151 (FMDGIGNGLGYGAILLAVGFV), and 178 to 198 (NGLLLLPPSAFFLIGMLIWII).

This sequence belongs to the NqrDE/RnfAE family. As to quaternary structure, composed of six subunits; NqrA, NqrB, NqrC, NqrD, NqrE and NqrF.

It localises to the cell inner membrane. The catalysed reaction is a ubiquinone + n Na(+)(in) + NADH + H(+) = a ubiquinol + n Na(+)(out) + NAD(+). NQR complex catalyzes the reduction of ubiquinone-1 to ubiquinol by two successive reactions, coupled with the transport of Na(+) ions from the cytoplasm to the periplasm. NqrA to NqrE are probably involved in the second step, the conversion of ubisemiquinone to ubiquinol. The chain is Na(+)-translocating NADH-quinone reductase subunit D from Shewanella oneidensis (strain ATCC 700550 / JCM 31522 / CIP 106686 / LMG 19005 / NCIMB 14063 / MR-1).